The chain runs to 380 residues: GTP-binding protein 10 (380 aa).

The Obg domain occupies 13–148 (GNFVDNVRLY…RNIRLDLKLI (136 aa)). Positions 149 to 344 (ADFGLVGFPN…LKSLIRQSLE (196 aa)) constitute an OBG-type G domain. GTP contacts are provided by residues 155–162 (GFPNAGKS), 202–206 (DLPGL), and 278–281 (NKMD).

The protein belongs to the TRAFAC class OBG-HflX-like GTPase superfamily. OBG GTPase family.

The protein resides in the nucleus. The protein localises to the nucleolus. May be involved in the ribosome maturation process. In Danio rerio (Zebrafish), this protein is GTP-binding protein 10 (gtpbp10).